Reading from the N-terminus, the 318-residue chain is MHVLFIIDPLPLLKAYKDSSVAMMQALQARGHTLSVALQGDLYIDAGEVRTRFAPIALRDGADLHGHDWWRETGAADEAPLARFDAVVMRKDPPFDMEYVYSTHLLEYAQQQGARVFNSGAAIRNHPEKLAITEFPDLTTPTLVTRDMGRIRAFHAAQGDVIVKPLDGMGGTGIFRLQRSEPNLNAILETLTDNGTRTIMAQRYIPEIVKGDKRILLIGGEPVPYSLARIPLAGETRGNLAAGGRGVAQPLSERDLHLARTVADRLAGRGLLLVGLDVIGDYITEVNVTSPTCFVEITEQTGFNVPEMFAVALESAAG.

The ATP-grasp domain maps to 129–314 (KLAITEFPDL…VPEMFAVALE (186 aa)). Position 155 to 211 (155 to 211 (HAAQGDVIVKPLDGMGGTGIFRLQRSEPNLNAILETLTDNGTRTIMAQRYIPEIVKG)) interacts with ATP. Residues E285 and N287 each coordinate Mg(2+).

The protein belongs to the prokaryotic GSH synthase family. Requires Mg(2+) as cofactor. Mn(2+) is required as a cofactor.

It carries out the reaction gamma-L-glutamyl-L-cysteine + glycine + ATP = glutathione + ADP + phosphate + H(+). It participates in sulfur metabolism; glutathione biosynthesis; glutathione from L-cysteine and L-glutamate: step 2/2. This chain is Glutathione synthetase, found in Bordetella bronchiseptica (strain ATCC BAA-588 / NCTC 13252 / RB50) (Alcaligenes bronchisepticus).